The sequence spans 87 residues: Small ribosomal subunit protein uS17 (87 aa).

Belongs to the universal ribosomal protein uS17 family. Part of the 30S ribosomal subunit.

One of the primary rRNA binding proteins, it binds specifically to the 5'-end of 16S ribosomal RNA. In Hydrogenovibrio crunogenus (strain DSM 25203 / XCL-2) (Thiomicrospira crunogena), this protein is Small ribosomal subunit protein uS17.